The chain runs to 122 residues: T-cell receptor beta chain V region C5 (122 aa).

An N-terminal signal peptide occupies residues I1–H7. Residues M8–G103 are v segment. Residues C31 and C99 are joined by a disulfide bond. The segment at T104–L108 is d segment. The tract at residues D109 to L122 is j segment.

This is T-cell receptor beta chain V region C5 from Mus musculus (Mouse).